The sequence spans 429 residues: MRSYERSKAAYEEAVTLMPGGVNSPVRAFKSVGMTPIFMARGQGAKIYDIDGNEYIDYVLSWGPLILGHADPQVVEALKRVAEQGTSFGAPTLLENELAKLVIERVPSVEIVRMVNSGTEATMSALRLARGYTKRNKIIKFEGSYHGHGDSLLIKAGSGVATLGLPDSPGVPQSVAQHTITVPYNDLDSVRYAFERFGEDIAAVIVEPVAGNMGVVPPVPGFLEGLRDVTKQYGALLIFDEVMTGFRVDYHCAQGYYGVEPDLTCLGKVIGGGLPVGAYGGKAEIMEQVAPSGPVYQAGTLSGNPLAMTAGYETLRQLTPETYKEFRRKAARLEEGLHQAAEKYEIPHTINRAGSMIGFFFTNEPVINYETAKTSDLELFAAYYREMANEGIFLPPSQFEGLFLSTAHSDEDIEYTIAAAERVFARLRG.

K268 is modified (N6-(pyridoxal phosphate)lysine).

It belongs to the class-III pyridoxal-phosphate-dependent aminotransferase family. HemL subfamily. As to quaternary structure, homodimer. Pyridoxal 5'-phosphate serves as cofactor.

It is found in the cytoplasm. It catalyses the reaction (S)-4-amino-5-oxopentanoate = 5-aminolevulinate. The protein operates within porphyrin-containing compound metabolism; protoporphyrin-IX biosynthesis; 5-aminolevulinate from L-glutamyl-tRNA(Glu): step 2/2. The sequence is that of Glutamate-1-semialdehyde 2,1-aminomutase 2 from Geobacillus thermodenitrificans (strain NG80-2).